The primary structure comprises 154 residues: MEKTPVKIIAKNKKAFFNYTVEEKIECGLVLKGTEVKSLREGRISFPDAFAEIKDNEVWVKNFHISEYIYSSVFNHDPERPKKLLLKKDEIKRLKRKVEEKGYTLVPLEFYFKNGIVKVLLGVCKGKKTFDKRADIKDRDIKRDMQREIKIRGK.

Belongs to the SmpB family.

Its subcellular location is the cytoplasm. Functionally, required for rescue of stalled ribosomes mediated by trans-translation. Binds to transfer-messenger RNA (tmRNA), required for stable association of tmRNA with ribosomes. tmRNA and SmpB together mimic tRNA shape, replacing the anticodon stem-loop with SmpB. tmRNA is encoded by the ssrA gene; the 2 termini fold to resemble tRNA(Ala) and it encodes a 'tag peptide', a short internal open reading frame. During trans-translation Ala-aminoacylated tmRNA acts like a tRNA, entering the A-site of stalled ribosomes, displacing the stalled mRNA. The ribosome then switches to translate the ORF on the tmRNA; the nascent peptide is terminated with the 'tag peptide' encoded by the tmRNA and targeted for degradation. The ribosome is freed to recommence translation, which seems to be the essential function of trans-translation. The chain is SsrA-binding protein from Treponema denticola (strain ATCC 35405 / DSM 14222 / CIP 103919 / JCM 8153 / KCTC 15104).